Reading from the N-terminus, the 2344-residue chain is Genome polyprotein (2344 aa).

The SF3 helicase domain occupies 492–653 (QKVISDLHTM…ESWQATRHGS (162 aa)). ATP is bound at residue 522–529 (GAPGIGKT). Tyr-1014 bears the O-(5'-phospho-RNA)-tyrosine mark. Tyr-1014 bears the O-UMP-tyrosine; transient mark. The Peptidase C24 domain occupies 1109-1244 (GLPGFMRHNG…SKMCTLIDLT (136 aa)). Residues His-1135, Asp-1152, and Cys-1212 each act as for 3CLpro activity in the active site. The 125-residue stretch at 1495–1619 (SDFLCLDYSK…AMTPMMVSLL (125 aa)) folds into the RdRp catalytic domain. Cysteines 1584 and 1591 form a disulfide. The disordered stretch occupies residues 1771–1794 (RTAPQGEAAGTATTASVPGTTTDG). Over residues 1778–1794 (AAGTATTASVPGTTTDG) the composition is skewed to low complexity.

Homodimer. In terms of assembly, homomultimer. Interacts with host type II histo-blood group structures antigens at the surface of target cells. The cofactor is Mn(2+). In terms of processing, specific enzymatic cleavages by its own cysteine protease yield mature proteins. The protease cleaves itself from the nascent polyprotein autocatalytically. Precursor p41 can be cleaved by viral 3CLpro into protein p19 and VPg, or cleaved by host protease into protein p23/2 and protein p18. Post-translationally, VPg is uridylylated by the polymerase and is covalently attached to the 5'-end of the polyadenylated genomic and subgenomic RNAs. This uridylylated form acts as a nucleotide-peptide primer for the polymerase.

It localises to the host cytoplasm. It is found in the host endoplasmic reticulum. The protein localises to the virion. It carries out the reaction a ribonucleoside 5'-triphosphate + H2O = a ribonucleoside 5'-diphosphate + phosphate + H(+). It catalyses the reaction Endopeptidase with a preference for cleavage when the P1 position is occupied by Glu-|-Xaa and the P1' position is occupied by Gly-|-Yaa.. The enzyme catalyses RNA(n) + a ribonucleoside 5'-triphosphate = RNA(n+1) + diphosphate. Functionally, together with NTPase and NS4, initiates the formation of the replication complex. Induces the proliferation of the host smooth ER membranes forming long tubular structures. These remodeled membranes probably form the viral factories that contain the replication complex. In terms of biological role, displays NTPase activity, but no helicase activity. Induces the formation of convoluted membranes derived from the host ER. These remodeled membranes probably form the viral factories that contain the replication complex. Together with NS2 and NS4, initiates the formation of the replication complex. Probable key protein responsible for the formation of membrane alterations by the virus. Induces the formation of convoluted membranes derived from the host ER. These remodeled membranes probably form the viral factories that contain the replication complex. Together with NS2 and NTPase, initiates the formation of the replication complex. Its function is as follows. Viral genome-linked protein is covalently linked to the 5'-end of the positive-strand, negative-strand genomic RNAs and subgenomic RNA. Acts as a genome-linked replication primer. May recruit ribosome to viral RNA thereby promoting viral proteins translation. Interacts with host translation initiation complex to allow the translation of viral proteins. Functionally, processes the polyprotein. 3CLpro-RdRp is first released by autocleavage, then all other proteins are cleaved. May cleave polyadenylate-binding protein thereby inhibiting cellular translation. In terms of biological role, replicates genomic and antigenomic RNA by recognizing replications specific signals. Also transcribes a subgenomic mRNA by initiating RNA synthesis internally on antigenomic RNA. This sgRNA codes for structural proteins. Catalyzes the covalent attachment VPg with viral RNAs. Capsid protein VP60 self assembles to form an icosahedral capsid with a T=3 symmetry, about 35 nm in diameter, and consisting of 180 capsid proteins. A smaller form of capsid with a diameter of 23 nm might be capsid proteins assembled as icosahedron with T=1 symmetry. The capsid encapsulate VP2 proteins and genomic or subgenomic RNA. Attaches virion to target cells by binding histo-blood group antigens, inducing endocytosis of the viral particle. Acidification of the endosome induces conformational change of capsid protein thereby injecting virus genomic RNA into host cytoplasm. The chain is Genome polyprotein from Oryctolagus cuniculus (Rabbit).